Reading from the N-terminus, the 262-residue chain is Acyl-[acyl-carrier-protein]--UDP-N-acetylglucosamine O-acyltransferase (262 aa).

This sequence belongs to the transferase hexapeptide repeat family. LpxA subfamily. As to quaternary structure, homotrimer.

It is found in the cytoplasm. It catalyses the reaction a (3R)-hydroxyacyl-[ACP] + UDP-N-acetyl-alpha-D-glucosamine = a UDP-3-O-[(3R)-3-hydroxyacyl]-N-acetyl-alpha-D-glucosamine + holo-[ACP]. It participates in glycolipid biosynthesis; lipid IV(A) biosynthesis; lipid IV(A) from (3R)-3-hydroxytetradecanoyl-[acyl-carrier-protein] and UDP-N-acetyl-alpha-D-glucosamine: step 1/6. Involved in the biosynthesis of lipid A, a phosphorylated glycolipid that anchors the lipopolysaccharide to the outer membrane of the cell. In Klebsiella pneumoniae (strain 342), this protein is Acyl-[acyl-carrier-protein]--UDP-N-acetylglucosamine O-acyltransferase.